The following is a 263-amino-acid chain: Thiamine thiazole synthase (263 aa).

NAD(+) contacts are provided by residues Ser-36, 55–56 (ER), Gly-63, Val-127, and 157–159 (HVD). Positions 159 and 174 each coordinate Fe cation. Met-228 provides a ligand contact to NAD(+). Position 238 (Arg-238) interacts with glycine.

It belongs to the THI4 family. Homooctamer; tetramer of dimers. Requires Fe(2+) as cofactor.

The catalysed reaction is hydrogen sulfide + glycine + NAD(+) = ADP-5-ethyl-4-methylthiazole-2-carboxylate + nicotinamide + 3 H2O + H(+). The protein operates within cofactor biosynthesis; thiamine diphosphate biosynthesis. Its function is as follows. Involved in the biosynthesis of the thiazole moiety of thiamine. Catalyzes the conversion of NAD and glycine to adenosine diphosphate 5-(2-hydroxyethyl)-4-methylthiazole-2-carboxylate (ADT), an adenylated thiazole intermediate, using free sulfide as a source of sulfur. The protein is Thiamine thiazole synthase of Solidesulfovibrio magneticus (strain ATCC 700980 / DSM 13731 / RS-1) (Desulfovibrio magneticus).